A 1104-amino-acid chain; its full sequence is Lon protease homolog, mitochondrial (1104 aa).

The transit peptide at 1-54 (MLRGQTLRWRAALQTPRSLILRPLFAPGGYNVGPRSVLETSRRFRSLPPSLRTF) directs the protein to the mitochondrion. Disordered stretches follow at residues 41–192 (SRRF…KPSV) and 296–317 (SLIP…TEKR). 2 stretches are compositionally biased toward basic and acidic residues: residues 64–104 (KPPP…DSSG) and 125–144 (KAAD…EAEA). A compositionally biased stretch (low complexity) spans 158–169 (SDSSSESKPSGS). Composition is skewed to basic and acidic residues over residues 172–187 (GGDD…DKAL) and 308–317 (NSEDKTTEKR). The region spanning 199 to 451 (VMAIPIAKRP…KGLVVLKKEL (253 aa)) is the Lon N-terminal domain. Residue 604-611 (GPPGVGKT) participates in ATP binding. Residues 825–839 (AEGKAAQEESEKETG) are compositionally biased toward basic and acidic residues. The segment at 825–857 (AEGKAAQEESEKETGPIESTSEQEKATTENPRV) is disordered. The Lon proteolytic domain occupies 891–1077 (TFPPGVTMGL…SEVFDILFAD (187 aa)). Catalysis depends on residues Ser-983 and Lys-1026.

Belongs to the peptidase S16 family. As to quaternary structure, homohexamer or homoheptamer. Organized in a ring with a central cavity.

It localises to the mitochondrion matrix. The enzyme catalyses Hydrolysis of proteins in presence of ATP.. In terms of biological role, ATP-dependent serine protease that mediates the selective degradation of misfolded, unassembled or oxidatively damaged polypeptides as well as certain short-lived regulatory proteins in the mitochondrial matrix. May also have a chaperone function in the assembly of inner membrane protein complexes. Participates in the regulation of mitochondrial gene expression and in the maintenance of the integrity of the mitochondrial genome. Binds to mitochondrial DNA in a site-specific manner. The sequence is that of Lon protease homolog, mitochondrial (pim1) from Emericella nidulans (strain FGSC A4 / ATCC 38163 / CBS 112.46 / NRRL 194 / M139) (Aspergillus nidulans).